The primary structure comprises 114 residues: Protein LLP homolog (114 aa).

2 stretches are compositionally biased toward basic residues: residues 1–21 (MAKS…RKKN) and 91–108 (QRKK…KSKL). Disordered stretches follow at residues 1 to 23 (MAKS…KNAP) and 91 to 114 (QRKK…GLAW).

It belongs to the learning-associated protein family.

The protein localises to the nucleus. It localises to the nucleolus. Its subcellular location is the chromosome. In terms of biological role, regulates dendritic and spine growth and synaptic transmission. The polypeptide is Protein LLP homolog (LLPH) (Gallus gallus (Chicken)).